The primary structure comprises 177 residues: Large ribosomal subunit protein uL6 (177 aa).

It belongs to the universal ribosomal protein uL6 family. Part of the 50S ribosomal subunit.

Its function is as follows. This protein binds to the 23S rRNA, and is important in its secondary structure. It is located near the subunit interface in the base of the L7/L12 stalk, and near the tRNA binding site of the peptidyltransferase center. The sequence is that of Large ribosomal subunit protein uL6 from Vibrio atlanticus (strain LGP32) (Vibrio splendidus (strain Mel32)).